Reading from the N-terminus, the 360-residue chain is S-adenosylmethionine:tRNA ribosyltransferase-isomerase (360 aa).

The protein belongs to the QueA family. Monomer.

Its subcellular location is the cytoplasm. It carries out the reaction 7-aminomethyl-7-carbaguanosine(34) in tRNA + S-adenosyl-L-methionine = epoxyqueuosine(34) in tRNA + adenine + L-methionine + 2 H(+). It functions in the pathway tRNA modification; tRNA-queuosine biosynthesis. In terms of biological role, transfers and isomerizes the ribose moiety from AdoMet to the 7-aminomethyl group of 7-deazaguanine (preQ1-tRNA) to give epoxyqueuosine (oQ-tRNA). This is S-adenosylmethionine:tRNA ribosyltransferase-isomerase from Nitrobacter winogradskyi (strain ATCC 25391 / DSM 10237 / CIP 104748 / NCIMB 11846 / Nb-255).